The following is a 399-amino-acid chain: Ras-related GTP-binding protein C (399 aa).

The segment at 1-20 (MSLQYGAEETPLAGSYGAAD) is disordered. Position 2 is an N-acetylserine (Ser2). 2 positions are modified to phosphoserine: Ser2 and Ser15. Residues Arg71, Ser72, Gly73, Lys74, Ser75, Ser76, Thr90, Glu94, Thr96, His178, Lys179, Asp181, Ser219, and Ile220 each coordinate GDP. Residue Lys74 participates in GTP binding. Position 90 (Thr90) interacts with GTP. Thr96 serves as a coordination point for GTP. Position 96 is a phosphothreonine (Thr96). GTP is bound at residue Asp181.

It belongs to the GTR/RAG GTP-binding protein family. As to quaternary structure, forms a heterodimer with RRAGA, in a sequence-independent manner, and RRAGB. Heterodimerization stabilizes proteins of the heterodimer. The GDP-bound form of RRAGC (in complex with the GTP-bound form of RRAGA or RRAGB), interacts with RPTOR, thereby promoting recruitment of mTORC1 to the lysosomes. Component of the lysosomal folliculin complex (LFC), composed of FLCN, FNIP1 (or FNIP2), RagA/RRAGA or RagB/RRAGB GDP-bound, RagC/RRAGC or RagD/RRAGD GTP-bound, and Ragulator. Interacts with NOL8. Interacts with SH3BP4; the interaction with this negative regulator is most probably direct, preferentially occurs with the inactive GDP-bound form of RRAGB, is negatively regulated by amino acids and prevents interaction with RPTOR. The Rag heterodimer interacts with SLC38A9; the probable amino acid sensor. Interacts with SESN1, SESN2 and SESN3. Interacts with PIP4P1. The Rag heterodimer interacts with the Ragulator complex. The GDP-bound form interacts with TFEB. The GDP-bound form interacts with TFE3.

It localises to the cytoplasm. The protein resides in the nucleus. It is found in the lysosome membrane. The catalysed reaction is GTP + H2O = GDP + phosphate + H(+). The activation of RagC/RRAGC is mediated by a GTPase activating protein (GAP). In high-amino acid conditions, activated by GTPase activating protein FLCN that stimulates RRAGC GTPase activity to turn it into its active GDP-bound form. In response to amino acid depletion, the GATOR1 complex inactivates RagC/RRAGC by securing the GTP-bound inactive form. In terms of biological role, guanine nucleotide-binding protein that plays a crucial role in the cellular response to amino acid availability through regulation of the mTORC1 signaling cascade. Forms heterodimeric Rag complexes with RagA/RRAGA or RagB/RRAGB and cycles between an inactive GTP-bound and an active GDP-bound form: RagC/RRAGC is in its active form when GDP-bound RagC/RRAGC forms a complex with GTP-bound RagA/RRAGA (or RagB/RRAGB) and in an inactive form when GTP-bound RagC/RRAGC heterodimerizes with GDP-bound RagA/RRAGA (or RagB/RRAGB). In its GDP-bound active form, promotes the recruitment of mTORC1 to the lysosomes and its subsequent activation by the GTPase RHEB. This is a crucial step in the activation of the MTOR signaling cascade by amino acids. Also plays a central role in the non-canonical mTORC1 complex, which acts independently of RHEB and specifically mediates phosphorylation of MiT/TFE factors TFEB and TFE3: GDP-bound RagC/RRAGC mediates recruitment of MiT/TFE factors TFEB and TFE3. The chain is Ras-related GTP-binding protein C from Homo sapiens (Human).